We begin with the raw amino-acid sequence, 249 residues long: Phosphoserine phosphatase (249 aa).

This sequence belongs to the HAD-like hydrolase superfamily. Homodimer. Mg(2+) serves as cofactor. Co(2+) is required as a cofactor.

The enzyme catalyses O-phospho-L-serine + H2O = L-serine + phosphate. It catalyses the reaction O-phospho-D-serine + H2O = D-serine + phosphate. It functions in the pathway amino-acid biosynthesis; L-serine biosynthesis; L-serine from 3-phospho-D-glycerate: step 3/3. Its function is as follows. Catalyzes the last step of the phosphorylated serine biosynthetic pathway, i.e. dephosphorylation of O-phospho-L-serine to form L-serine. Is also able to dephosphorylate O-phospho-D-serine with similar efficiency. Displays a poor activity on L-phosphothreonine, and cannot use L-phosphotyrosine, pyridoxal phosphate, glucose 6-phosphate, or fructose 6-phosphate as substrates. This Thermus thermophilus (strain ATCC BAA-163 / DSM 7039 / HB27) protein is Phosphoserine phosphatase.